Consider the following 240-residue polypeptide: Manganese transport system ATP-binding protein MntB (240 aa).

The region spanning 1–233 is the ABC transporter domain; sequence MNIQGLTIAY…KIQFAYGDAP (233 aa). 33-40 contributes to the ATP binding site; it reads GPNGAGKS.

The protein belongs to the ABC transporter superfamily.

Its subcellular location is the cell membrane. In terms of biological role, this protein is probably a component of a manganese permease, a binding protein-dependent, ATP-driven transport system. Probably responsible for energy coupling to the transport system. This is Manganese transport system ATP-binding protein MntB (mntB) from Listeria innocua serovar 6a (strain ATCC BAA-680 / CLIP 11262).